The chain runs to 166 residues: NADH-quinone oxidoreductase subunit C (166 aa).

It belongs to the complex I 30 kDa subunit family. NDH-1 is composed of 14 different subunits. Subunits NuoB, C, D, E, F, and G constitute the peripheral sector of the complex.

Its subcellular location is the cell inner membrane. It catalyses the reaction a quinone + NADH + 5 H(+)(in) = a quinol + NAD(+) + 4 H(+)(out). Functionally, NDH-1 shuttles electrons from NADH, via FMN and iron-sulfur (Fe-S) centers, to quinones in the respiratory chain. The immediate electron acceptor for the enzyme in this species is believed to be a menaquinone. Couples the redox reaction to proton translocation (for every two electrons transferred, four hydrogen ions are translocated across the cytoplasmic membrane), and thus conserves the redox energy in a proton gradient. This is NADH-quinone oxidoreductase subunit C from Chlorobium phaeobacteroides (strain DSM 266 / SMG 266 / 2430).